A 321-amino-acid polypeptide reads, in one-letter code: Tyrosine recombinase XerC (321 aa).

The 92-residue stretch at 16 to 107 folds into the Core-binding (CB) domain; it reads PSIAQEMTRW…GLRSFGRFLE (92 aa). In terms of domain architecture, Tyr recombinase spans 128 to 315; that stretch reads SLPKPLPMAS…DSERLLEVYA (188 aa). Active-site residues include R173, K199, H267, R270, and H293. The active-site O-(3'-phospho-DNA)-tyrosine intermediate is the Y302.

It belongs to the 'phage' integrase family. XerC subfamily. As to quaternary structure, forms a cyclic heterotetrameric complex composed of two molecules of XerC and two molecules of XerD.

The protein localises to the cytoplasm. Functionally, site-specific tyrosine recombinase, which acts by catalyzing the cutting and rejoining of the recombining DNA molecules. The XerC-XerD complex is essential to convert dimers of the bacterial chromosome into monomers to permit their segregation at cell division. It also contributes to the segregational stability of plasmids. This Bradyrhizobium diazoefficiens (strain JCM 10833 / BCRC 13528 / IAM 13628 / NBRC 14792 / USDA 110) protein is Tyrosine recombinase XerC.